A 1183-amino-acid chain; its full sequence is DNA-directed RNA polymerase subunit beta (1183 aa).

Positions 1153-1162 (DMQDNEEEDV) are enriched in acidic residues. A disordered region spans residues 1153–1183 (DMQDNEEEDVVERKVDLQQKDAPQSQKEVTD). A compositionally biased stretch (polar residues) spans 1173–1183 (DAPQSQKEVTD).

The protein belongs to the RNA polymerase beta chain family. In terms of assembly, the RNAP catalytic core consists of 2 alpha, 1 beta, 1 beta' and 1 omega subunit. When a sigma factor is associated with the core the holoenzyme is formed, which can initiate transcription.

The enzyme catalyses RNA(n) + a ribonucleoside 5'-triphosphate = RNA(n+1) + diphosphate. DNA-dependent RNA polymerase catalyzes the transcription of DNA into RNA using the four ribonucleoside triphosphates as substrates. The chain is DNA-directed RNA polymerase subunit beta from Staphylococcus saprophyticus subsp. saprophyticus (strain ATCC 15305 / DSM 20229 / NCIMB 8711 / NCTC 7292 / S-41).